A 580-amino-acid chain; its full sequence is DNA ligase 1 (580 aa).

Position 245 (glutamate 245) interacts with ATP. Lysine 247 functions as the N6-AMP-lysine intermediate in the catalytic mechanism. ATP-binding residues include arginine 252, arginine 267, glutamate 297, phenylalanine 343, arginine 420, and lysine 426.

Belongs to the ATP-dependent DNA ligase family. The cofactor is Mg(2+).

It catalyses the reaction ATP + (deoxyribonucleotide)n-3'-hydroxyl + 5'-phospho-(deoxyribonucleotide)m = (deoxyribonucleotide)n+m + AMP + diphosphate.. Its function is as follows. DNA ligase that seals nicks in double-stranded DNA during DNA replication, DNA recombination and DNA repair. In Methanosarcina acetivorans (strain ATCC 35395 / DSM 2834 / JCM 12185 / C2A), this protein is DNA ligase 1.